The sequence spans 143 residues: Hemoglobin subunit alpha (143 aa).

The region spanning 2-143 is the Globin domain; sequence VLSPADKTNV…VSTVLVSKYR (142 aa). Ser4 is subject to Phosphoserine. Lys8 bears the N6-succinyllysine mark. The residue at position 9 (Thr9) is a Phosphothreonine. Residue Lys12 is modified to N6-succinyllysine. Lys17 is modified (N6-acetyllysine; alternate). Residue Lys17 is modified to N6-succinyllysine; alternate. Position 25 is a phosphotyrosine (Tyr25). Ser36 is subject to Phosphoserine. The residue at position 41 (Lys41) is an N6-succinyllysine. Ser51 is subject to Phosphoserine. Residue His60 coordinates O2. Residue His89 participates in heme b binding. At Ser104 the chain carries Phosphoserine. Thr110 carries the post-translational modification Phosphothreonine. At Ser126 the chain carries Phosphoserine. The residue at position 136 (Thr136) is a Phosphothreonine. Ser140 bears the Phosphoserine mark.

The protein belongs to the globin family. As to quaternary structure, heterotetramer of two alpha chains and two beta chains. As to expression, red blood cells.

Functionally, involved in oxygen transport from the lung to the various peripheral tissues. In terms of biological role, hemopressin acts as an antagonist peptide of the cannabinoid receptor CNR1. Hemopressin-binding efficiently blocks cannabinoid receptor CNR1 and subsequent signaling. The sequence is that of Hemoglobin subunit alpha (HBA) from Pipistrellus abramus (Japanese pipistrelle).